Consider the following 619-residue polypeptide: Serine/threonine-protein kinase pkn1 (619 aa).

In terms of domain architecture, Protein kinase spans Tyr-15–Leu-302. Lys-21–Asp-29 lines the ATP pocket. Residue Glu-141 is the Proton acceptor of the active site.

This sequence belongs to the protein kinase superfamily. Ser/Thr protein kinase family. Autophosphorylated on serine and threonine residues.

The enzyme catalyses L-seryl-[protein] + ATP = O-phospho-L-seryl-[protein] + ADP + H(+). The catalysed reaction is L-threonyl-[protein] + ATP = O-phospho-L-threonyl-[protein] + ADP + H(+). In terms of biological role, together with the serine/threonine kinase PknD, may play a role in the specific interactions with host proteins during intracellular growth. The sequence is that of Serine/threonine-protein kinase pkn1 (pkn1) from Chlamydia pneumoniae (Chlamydophila pneumoniae).